A 563-amino-acid polypeptide reads, in one-letter code: Arginine--tRNA ligase (563 aa).

A 'HIGH' region motif is present at residues 121–131 (PNIAKPFSIGH).

Belongs to the class-I aminoacyl-tRNA synthetase family. Monomer.

Its subcellular location is the cytoplasm. It carries out the reaction tRNA(Arg) + L-arginine + ATP = L-arginyl-tRNA(Arg) + AMP + diphosphate. This Streptococcus pyogenes serotype M18 (strain MGAS8232) protein is Arginine--tRNA ligase.